Consider the following 317-residue polypeptide: COP9 signalosome complex subunit 6b (317 aa).

One can recognise an MPN domain in the interval 11-164 (FKLHPLVMLN…VTIYESEFHV (154 aa)).

It belongs to the peptidase M67A family. CSN6 subfamily. As to quaternary structure, component of the CSN complex, probably composed of CSN1, CSN2, CSN3, CSN4, CSN5 (CSN5A or CSN5B), CSN6 (CSN6A or CSN6B), CSN7 and CSN8. Interacts with itself. In the complex, it probably interacts directly with CSN4, CSN5A or CSN5B, and CSN7. Binds to the translation initiation factors TIF3E1.

It is found in the cytoplasm. The protein resides in the nucleus. Its function is as follows. Component of the COP9 signalosome complex (CSN), a complex involved in various cellular and developmental processes such as photomorphogenesis and auxin and jasmonate responses. The CSN complex is an essential regulator of the ubiquitin (Ubl) conjugation pathway by mediating the deneddylation of the cullin subunits of SCF-type E3 ligase complexes, leading to decrease the Ubl ligase activity of SCF. It is involved in repression of photomorphogenesis in darkness by regulating the activity of COP1-containing Ubl ligase complexes. The complex is also required for degradation of PSIAA6 by regulating the activity of the Ubl ligase SCF-TIR complex. Essential for the structural integrity of the CSN holocomplex. This chain is COP9 signalosome complex subunit 6b, found in Arabidopsis thaliana (Mouse-ear cress).